A 380-amino-acid chain; its full sequence is Putative RNA ligase (380 aa).

Its function is as follows. Putative RNA ligase. Is able to catalyze the adenylation reaction of ssDNA 3'-terminal phosphate (ssDNA 3'p) to 3'-adenylated DNA (ssDNA 3'pp5'A). The protein is Putative RNA ligase of Thermovibrio ammonificans (strain DSM 15698 / JCM 12110 / HB-1).